The sequence spans 386 residues: Short-chain dehydrogenase/reductase family 42E member 1 (386 aa).

Y150 functions as the Proton acceptor in the catalytic mechanism. K154 is an NAD(+) binding site. 2 helical membrane-spanning segments follow: residues 279–299 (FPLS…FFIS) and 363–383 (YLIW…SWLP).

The protein belongs to the 3-beta-HSD family.

The protein resides in the membrane. This chain is Short-chain dehydrogenase/reductase family 42E member 1 (sdr42e1), found in Xenopus laevis (African clawed frog).